Reading from the N-terminus, the 114-residue chain is Biofilm growth-associated repressor (114 aa).

The HTH arsR-type domain maps to 17 to 111 (DMEKRANEVA…ALYTIFCAQE (95 aa)). Positions 51–74 (VGELEQQIGIGQPTLSQQLGVLRE) form a DNA-binding region, H-T-H motif.

Functionally, represses an operon that comprises itself, XF_0764, XF_0765, XF_0766 and blh. Binds to a palindromic AT-rich sequence spanning the -10 region of the blh promoter and blocks transcription of the operon. This is Biofilm growth-associated repressor (bigR) from Xylella fastidiosa (strain 9a5c).